A 467-amino-acid polypeptide reads, in one-letter code: Colanic acid biosynthesis protein WcaM (467 aa).

It functions in the pathway slime biogenesis; slime polysaccharide biosynthesis. This Salmonella typhimurium (strain LT2 / SGSC1412 / ATCC 700720) protein is Colanic acid biosynthesis protein WcaM (wcaM).